The primary structure comprises 154 residues: tRNA (cytidine(34)-2'-O)-methyltransferase (154 aa).

S-adenosyl-L-methionine is bound by residues Leu78, Gly100, Ile122, and Ser130.

Belongs to the class IV-like SAM-binding methyltransferase superfamily. RNA methyltransferase TrmH family. TrmL subfamily. As to quaternary structure, homodimer.

The protein localises to the cytoplasm. It carries out the reaction cytidine(34) in tRNA + S-adenosyl-L-methionine = 2'-O-methylcytidine(34) in tRNA + S-adenosyl-L-homocysteine + H(+). The enzyme catalyses 5-carboxymethylaminomethyluridine(34) in tRNA(Leu) + S-adenosyl-L-methionine = 5-carboxymethylaminomethyl-2'-O-methyluridine(34) in tRNA(Leu) + S-adenosyl-L-homocysteine + H(+). Methylates the ribose at the nucleotide 34 wobble position in the two leucyl isoacceptors tRNA(Leu)(CmAA) and tRNA(Leu)(cmnm5UmAA). Catalyzes the methyl transfer from S-adenosyl-L-methionine to the 2'-OH of the wobble nucleotide. This is tRNA (cytidine(34)-2'-O)-methyltransferase from Saccharophagus degradans (strain 2-40 / ATCC 43961 / DSM 17024).